The sequence spans 335 residues: Nucleoid-associated protein PputW619_4243 (335 aa).

It belongs to the YejK family.

The protein localises to the cytoplasm. It localises to the nucleoid. The sequence is that of Nucleoid-associated protein PputW619_4243 from Pseudomonas putida (strain W619).